The following is a 119-amino-acid chain: DNA-binding protein MmarC7_1157 (119 aa).

A compositionally biased stretch (basic and acidic residues) spans Met-1–Gln-12. The disordered stretch occupies residues Met-1–Gln-37.

It belongs to the PDCD5 family.

The chain is DNA-binding protein MmarC7_1157 from Methanococcus maripaludis (strain C7 / ATCC BAA-1331).